Consider the following 369-residue polypeptide: tRNA 2-selenouridine synthase (369 aa).

Residues 12–136 form the Rhodanese domain; sequence FLDDIPLMDV…LRNFLFETTR (125 aa). Cysteine 95 (S-selanylcysteine intermediate) is an active-site residue.

It belongs to the SelU family. As to quaternary structure, monomer.

It carries out the reaction 5-methylaminomethyl-2-thiouridine(34) in tRNA + selenophosphate + (2E)-geranyl diphosphate + H2O + H(+) = 5-methylaminomethyl-2-selenouridine(34) in tRNA + (2E)-thiogeraniol + phosphate + diphosphate. The catalysed reaction is 5-methylaminomethyl-2-thiouridine(34) in tRNA + (2E)-geranyl diphosphate = 5-methylaminomethyl-S-(2E)-geranyl-thiouridine(34) in tRNA + diphosphate. It catalyses the reaction 5-methylaminomethyl-S-(2E)-geranyl-thiouridine(34) in tRNA + selenophosphate + H(+) = 5-methylaminomethyl-2-(Se-phospho)selenouridine(34) in tRNA + (2E)-thiogeraniol. The enzyme catalyses 5-methylaminomethyl-2-(Se-phospho)selenouridine(34) in tRNA + H2O = 5-methylaminomethyl-2-selenouridine(34) in tRNA + phosphate. Involved in the post-transcriptional modification of the uridine at the wobble position (U34) of tRNA(Lys), tRNA(Glu) and tRNA(Gln). Catalyzes the conversion of 2-thiouridine (S2U-RNA) to 2-selenouridine (Se2U-RNA). Acts in a two-step process involving geranylation of 2-thiouridine (S2U) to S-geranyl-2-thiouridine (geS2U) and subsequent selenation of the latter derivative to 2-selenouridine (Se2U) in the tRNA chain. This is tRNA 2-selenouridine synthase from Pseudomonas aeruginosa (strain ATCC 15692 / DSM 22644 / CIP 104116 / JCM 14847 / LMG 12228 / 1C / PRS 101 / PAO1).